Consider the following 249-residue polypeptide: ATP synthase subunit a (249 aa).

Transmembrane regions (helical) follow at residues phenylalanine 26–leucine 46, phenylalanine 84–phenylalanine 104, isoleucine 114–phenylalanine 134, leucine 143–isoleucine 163, isoleucine 185–isoleucine 205, and alanine 208–leucine 228.

The protein belongs to the ATPase A chain family. As to quaternary structure, F-type ATPases have 2 components, CF(1) - the catalytic core - and CF(0) - the membrane proton channel. CF(1) has five subunits: alpha(3), beta(3), gamma(1), delta(1), epsilon(1). CF(0) has three main subunits: a(1), b(2) and c(9-12). The alpha and beta chains form an alternating ring which encloses part of the gamma chain. CF(1) is attached to CF(0) by a central stalk formed by the gamma and epsilon chains, while a peripheral stalk is formed by the delta and b chains.

The protein localises to the cell inner membrane. Functionally, key component of the proton channel; it plays a direct role in the translocation of protons across the membrane. In Brucella canis (strain ATCC 23365 / NCTC 10854 / RM-666), this protein is ATP synthase subunit a.